A 617-amino-acid chain; its full sequence is Dihydroxy-acid dehydratase (617 aa).

Position 81 (aspartate 81) interacts with Mg(2+). Cysteine 122 lines the [2Fe-2S] cluster pocket. Mg(2+) is bound by residues aspartate 123 and lysine 124. An N6-carboxylysine modification is found at lysine 124. Cysteine 197 is a binding site for [2Fe-2S] cluster. Glutamate 493 contacts Mg(2+). Serine 519 functions as the Proton acceptor in the catalytic mechanism.

It belongs to the IlvD/Edd family. Homodimer. [2Fe-2S] cluster serves as cofactor. Requires Mg(2+) as cofactor.

The enzyme catalyses (2R)-2,3-dihydroxy-3-methylbutanoate = 3-methyl-2-oxobutanoate + H2O. It carries out the reaction (2R,3R)-2,3-dihydroxy-3-methylpentanoate = (S)-3-methyl-2-oxopentanoate + H2O. Its pathway is amino-acid biosynthesis; L-isoleucine biosynthesis; L-isoleucine from 2-oxobutanoate: step 3/4. The protein operates within amino-acid biosynthesis; L-valine biosynthesis; L-valine from pyruvate: step 3/4. In terms of biological role, functions in the biosynthesis of branched-chain amino acids. Catalyzes the dehydration of (2R,3R)-2,3-dihydroxy-3-methylpentanoate (2,3-dihydroxy-3-methylvalerate) into 2-oxo-3-methylpentanoate (2-oxo-3-methylvalerate) and of (2R)-2,3-dihydroxy-3-methylbutanoate (2,3-dihydroxyisovalerate) into 2-oxo-3-methylbutanoate (2-oxoisovalerate), the penultimate precursor to L-isoleucine and L-valine, respectively. The chain is Dihydroxy-acid dehydratase from Corynebacterium aurimucosum (strain ATCC 700975 / DSM 44827 / CIP 107346 / CN-1) (Corynebacterium nigricans).